Consider the following 348-residue polypeptide: Histidinol-phosphate aminotransferase (348 aa).

N6-(pyridoxal phosphate)lysine is present on Lys211.

Belongs to the class-II pyridoxal-phosphate-dependent aminotransferase family. Histidinol-phosphate aminotransferase subfamily. Homodimer. Requires pyridoxal 5'-phosphate as cofactor.

It carries out the reaction L-histidinol phosphate + 2-oxoglutarate = 3-(imidazol-4-yl)-2-oxopropyl phosphate + L-glutamate. The protein operates within amino-acid biosynthesis; L-histidine biosynthesis; L-histidine from 5-phospho-alpha-D-ribose 1-diphosphate: step 7/9. The chain is Histidinol-phosphate aminotransferase from Pseudomonas entomophila (strain L48).